Reading from the N-terminus, the 707-residue chain is MQLGEQLLVSSVNLPGAHFYSLESARGGGGGGGGGGGGGGGSVSLLPGAAPSPQRLDLDKASKKFPGSLPCQAGSAEPAGAGAGAPAAMLSDADAGDTFGSTSAVAKPGPPDGRKGSPCAEEELPSAATAAATARYSMDSLSSERYYLPSPGPQGSELAAPCSLFQYPAAAGAAHGPVYPASNGARYPYGSMLPPGGFPAAVCPPARAQFGPAAGSGSGAGSSGGGAGGPGAYPYGQGSPLYGPYAGTSAAGSCGGLGGLGVPGSGFRAHVYLCNRPLWLKFHRHQTEMIITKQGRRMFPFLSFNINGLNPTAHYNVFVEVVLADPNHWRFQGGKWVTCGKADNNMQGNKMYVHPESPNTGSHWMRQEISFGKLKLTNNKGANNNNTQMIVLQSLHKYQPRLHIVEVTEDGVEDLNEPSKTQTFTFSETQFIAVTAYQNTDITQLKIDHNPFAKGFRDNYDSMYTASENDRLTPSPTDSPRSHQIVPGGRYGVQNFFPEPFVNTLPQARYYNGERTVPQTNGLLSPQQSEEVANPPQRWLVTPVQQPVTNKLDIGSYESEYTSSTLLPYGIKSLPLQTSHALGYYPDPTFPAMAGWGGRGAYQRKMAAGLPWTSRMSPPVFPEDQLAKEKVKEEISSSWIETPPSIKSLDSSDSGVYNSACKRKRLSPSTPSNGNSPPIKCEDINTEEYSKDTSKGMGAYYAFYTSP.

Over residues 27–42 (GGGGGGGGGGGGGGGS) the composition is skewed to gly residues. Residues 27–125 (GGGGGGGGGG…GSPCAEEELP (99 aa)) form a disordered region. Residues 73–93 (AGSAEPAGAGAGAPAAMLSDA) are compositionally biased toward low complexity. Ser-117 bears the Phosphoserine mark. A DNA-binding region (T-box) is located at residues 278 to 458 (LWLKFHRHQT…HNPFAKGFRD (181 aa)). Residue Thr-473 is modified to Phosphothreonine. Residues 592–707 (AMAGWGGRGA…GAYYAFYTSP (116 aa)) are required for transcription activation. Residues 642–689 (TPPSIKSLDSSDSGVYNSACKRKRLSPSTPSNGNSPPIKCEDINTEEY) are disordered. Residues 648 to 657 (SLDSSDSGVY) are compositionally biased toward polar residues. Positions 667 to 678 (SPSTPSNGNSPP) are enriched in low complexity. Residues 680-689 (KCEDINTEEY) are compositionally biased toward basic and acidic residues.

Expressed in CD8+ T-cells.

It localises to the nucleus. Its function is as follows. Functions as a transcriptional activator playing a crucial role during development. Functions in trophoblast differentiation and later in gastrulation, regulating both mesoderm delamination and endoderm specification. Plays a role in brain development being required for the specification and the proliferation of the intermediate progenitor cells and their progeny in the cerebral cortex. Required for differentiation and migration of unipolar dendritic brush cells. Also involved in the differentiation of CD8+ T-cells during immune response regulating the expression of lytic effector genes. This is Eomesodermin homolog (Eomes) from Mus musculus (Mouse).